Here is a 266-residue protein sequence, read N- to C-terminus: Tryptophan synthase alpha chain (266 aa).

Active-site proton acceptor residues include glutamate 49 and aspartate 60.

This sequence belongs to the TrpA family. In terms of assembly, tetramer of two alpha and two beta chains.

It catalyses the reaction (1S,2R)-1-C-(indol-3-yl)glycerol 3-phosphate + L-serine = D-glyceraldehyde 3-phosphate + L-tryptophan + H2O. It functions in the pathway amino-acid biosynthesis; L-tryptophan biosynthesis; L-tryptophan from chorismate: step 5/5. Its function is as follows. The alpha subunit is responsible for the aldol cleavage of indoleglycerol phosphate to indole and glyceraldehyde 3-phosphate. The protein is Tryptophan synthase alpha chain of Thioalkalivibrio sulfidiphilus (strain HL-EbGR7).